The primary structure comprises 1497 residues: DNA-directed RNA polymerase subunit beta (1497 aa).

It belongs to the RNA polymerase beta chain family. As to quaternary structure, the RNAP catalytic core consists of 2 alpha, 1 beta, 1 beta' and 1 omega subunit. When a sigma factor is associated with the core the holoenzyme is formed, which can initiate transcription.

It catalyses the reaction RNA(n) + a ribonucleoside 5'-triphosphate = RNA(n+1) + diphosphate. DNA-dependent RNA polymerase catalyzes the transcription of DNA into RNA using the four ribonucleoside triphosphates as substrates. This is DNA-directed RNA polymerase subunit beta from Trichlorobacter lovleyi (strain ATCC BAA-1151 / DSM 17278 / SZ) (Geobacter lovleyi).